The primary structure comprises 445 residues: MSDMKVNFSSKIIDSTPSEEEVATQQDSYTKSGLVAPSLDSQALKKAPRKRVIKENIAALHTSSLERVHQKKVLVQNLAQLQRGLAKINGRVELEELIDGFSVKELLIKRNPKIAEEYGEGNPLMIRSLRFSNPQEVTSKLGAEGKTPAKREVDTICNKSTLHDIVMTPASLVKKEVRMNLISEVPRAKDKQKYRGLPSVVYGQSSRRSESDYLTSRNGFGDVHSLKSNNAFNSDYEKICGSLSHAEKLGLIERNLTPFIRHDPDRISTDFVHSIEELAEHQMLLQSRKPASALRHNEYCTKLELWDAKAIAVGESRALAVATLIEFNLEMLSIAQEIDDDGHKSKMVADFIERQLSWLGPQTALDSKSTLERVSAVTIQEREFIANEISRSLRQGVSLCTYDKDEAGSHIREMSLLDFRVEEIIEGISIFISSKLLHVTNAGEA.

This is an uncharacterized protein from Xanthomonas euvesicatoria.